The chain runs to 258 residues: tRNA pseudouridine synthase A (258 aa).

Catalysis depends on Asp-54, which acts as the Nucleophile. Residue Tyr-112 participates in substrate binding.

The protein belongs to the tRNA pseudouridine synthase TruA family. Homodimer.

It catalyses the reaction uridine(38/39/40) in tRNA = pseudouridine(38/39/40) in tRNA. In terms of biological role, formation of pseudouridine at positions 38, 39 and 40 in the anticodon stem and loop of transfer RNAs. The chain is tRNA pseudouridine synthase A from Geobacillus kaustophilus (strain HTA426).